Reading from the N-terminus, the 252-residue chain is Phosphate import ATP-binding protein PstB (252 aa).

Residues 6–247 form the ABC transporter domain; sequence IEVKNLNTYF…PKNKQTENYI (242 aa). 38–45 is a binding site for ATP; sequence GPSGCGKS.

Belongs to the ABC transporter superfamily. Phosphate importer (TC 3.A.1.7) family. In terms of assembly, the complex is composed of two ATP-binding proteins (PstB), two transmembrane proteins (PstC and PstA) and a solute-binding protein (PstS).

The protein resides in the cell membrane. It carries out the reaction phosphate(out) + ATP + H2O = ADP + 2 phosphate(in) + H(+). Part of the ABC transporter complex PstSACB involved in phosphate import. Responsible for energy coupling to the transport system. The sequence is that of Phosphate import ATP-binding protein PstB from Methanosphaera stadtmanae (strain ATCC 43021 / DSM 3091 / JCM 11832 / MCB-3).